Consider the following 123-residue polypeptide: Protein Wnt-7b (123 aa).

Serine 1 carries the O-palmitoleoyl serine; by PORCN lipid modification. A disordered linker region spans residues 33–61 (VEVVRASRLRQPTFLKIKQIRSYQKPMET). Cysteine 89 and cysteine 104 form a disulfide bridge. Asparagine 90 carries an N-linked (GlcNAc...) asparagine glycan.

This sequence belongs to the Wnt family. Post-translationally, palmitoleoylation is required for efficient binding to frizzled receptors. Depalmitoleoylation leads to Wnt signaling pathway inhibition.

The protein localises to the secreted. It is found in the extracellular space. It localises to the extracellular matrix. Its function is as follows. Ligand for members of the frizzled family of seven transmembrane receptors that functions in the canonical Wnt/beta-catenin signaling pathway. Required for normal fusion of the chorion and the allantois during placenta development. Required for central nervous system (CNS) angiogenesis and blood-brain barrier regulation. In Sceloporus occidentalis (Western fence lizard), this protein is Protein Wnt-7b (WNT-7B).